A 152-amino-acid chain; its full sequence is Small ribosomal subunit protein uS19 (152 aa).

The protein belongs to the universal ribosomal protein uS19 family.

This is Small ribosomal subunit protein uS19 (RPS15) from Podospora anserina (Pleurage anserina).